The sequence spans 298 residues: DDRGK domain-containing protein 1 (298 aa).

Residues 1–21 (MDIVLYFVAVPILIVLIVSAV) form a helical membrane-spanning segment. Residues 22 to 298 (KVRGKTEEDN…NLIPEIHNTA (277 aa)) lie on the Cytoplasmic side of the membrane. The segment at 71–149 (NSAYREAADN…EERRKEDKKE (79 aa)) is disordered. The span at 82–94 (SPVEVEEEYEEAE) shows a compositional bias: acidic residues. Positions 110–149 (KLEEKQAKRAQREAELEEREERKRTQELREEERRKEDKKE) are enriched in basic and acidic residues. The short motif at 181–195 (SFVVEEQGEADELTE) is the UFM1-interacting motif (UFIM) element. Residues 215–259 (VLLEDLASHFGLRTQDAISRLQDLLSDGSITGVIDDRGKFIFITP) form the PCI domain.

Belongs to the DDRGK1 family. Component of the UFM1 ribosome E3 ligase (UREL) complex, composed of ufl1, ddrgk1 and cdk5rap3.

Its subcellular location is the endoplasmic reticulum membrane. Its function is as follows. Component of the UFM1 ribosome E3 ligase (UREL) complex, a multiprotein complex that catalyzes ufmylation of endoplasmic reticulum-docked proteins. The UREL complex plays a key role in ribosome recycling by mediating mono-ufmylation of the RPL26/uL24 subunit of the 60S ribosome following ribosome dissociation: ufmylation weakens the junction between post-termination 60S subunits and SEC61 translocons, promoting release and recycling of the large ribosomal subunit from the endoplasmic reticulum membrane. Ufmylation of RPL26/uL24 and subsequent 60S ribosome recycling either take place after normal termination of translation or after ribosome stalling during cotranslational translocation at the endoplasmic reticulum. Within the UREL complex, DDRGK1 tethers the complex to the endoplasmic reticulum membrane to restrict its activity to endoplasmic reticulum-docked ribosomes and acts as an ufmylation 'reader': following RPL26/uL24 ufmylation, DDRGK1 specifically binds to ufmylated RPL26/uL24 via its UFIM motif, resulting in stable association between the 60S ribosome and the UREL complex, followed by dissociation of the 60S ribosome subunit from the endoplasmic reticulum membrane. The UREL complex is also involved in reticulophagy in response to endoplasmic reticulum stress by promoting ufmylation of proteins such as CYB5R3 and RPN1, thereby promoting lysosomal degradation of ufmylated proteins. Required for stabilization and ufmylation of ATG9A. The chain is DDRGK domain-containing protein 1 from Osmerus mordax (Rainbow smelt).